The sequence spans 202 residues: Na(+)-translocating NADH-quinone reductase subunit E (202 aa).

The next 6 membrane-spanning stretches (helical) occupy residues 11–31, 35–55, 81–101, 114–134, 144–164, and 180–200; these read AIFVENMALAFFLGMCTFLAI, IEAATGLGIAVVVVLTVTVPV, FLGLLTYIGVIAAIVQIMEMV, GVFLPLITVNCAILGASLFMV, LVYGFGAGVGWALAIIALAGI, and LGITFITVGLMSLGFMSFSGI.

This sequence belongs to the NqrDE/RnfAE family. As to quaternary structure, composed of six subunits; NqrA, NqrB, NqrC, NqrD, NqrE and NqrF.

Its subcellular location is the cell inner membrane. It carries out the reaction a ubiquinone + n Na(+)(in) + NADH + H(+) = a ubiquinol + n Na(+)(out) + NAD(+). In terms of biological role, NQR complex catalyzes the reduction of ubiquinone-1 to ubiquinol by two successive reactions, coupled with the transport of Na(+) ions from the cytoplasm to the periplasm. NqrA to NqrE are probably involved in the second step, the conversion of ubisemiquinone to ubiquinol. This Marinobacter nauticus (strain ATCC 700491 / DSM 11845 / VT8) (Marinobacter aquaeolei) protein is Na(+)-translocating NADH-quinone reductase subunit E.